Here is a 337-residue protein sequence, read N- to C-terminus: Phytanoyl-CoA dioxygenase, peroxisomal (337 aa).

A peroxisome-targeting transit peptide spans 1–30 (MDRNRASARLTVLLRHLGCRSAGTIIAHHT). An N6-succinyllysine mark is found at Lys-59 and Lys-108. 2-oxoglutarate contacts are provided by residues Lys-120, Met-157, 175 to 177 (HQD), and Trp-193. 2 residues coordinate Fe cation: His-175 and Asp-177. At Lys-252 the chain carries N6-succinyllysine. His-264 is a binding site for Fe cation. 2-oxoglutarate-binding residues include Ser-266 and Arg-275.

The protein belongs to the PhyH family. Interacts with FKBP52 and PHYHIP. Fe cation is required as a cofactor. The cofactor is L-ascorbate. Requires ATP as cofactor. It depends on Mg(2+) as a cofactor.

The protein resides in the peroxisome. It catalyses the reaction phytanoyl-CoA + 2-oxoglutarate + O2 = 2-hydroxyphytanoyl-CoA + succinate + CO2. The catalysed reaction is 3-methylhexadecanoyl-CoA + 2-oxoglutarate + O2 = 2-hydroxy-3-methylhexadecanoyl-CoA + succinate + CO2. It carries out the reaction hexadecanoyl-CoA + 2-oxoglutarate + O2 = 2-hydroxyhexadecanoyl-CoA + succinate + CO2. The enzyme catalyses octanoyl-CoA + 2-oxoglutarate + O2 = 2-hydroxyoctanoyl-CoA + succinate + CO2. It catalyses the reaction decanoyl-CoA + 2-oxoglutarate + O2 = 2-hydroxydecanoyl-CoA + succinate + CO2. The catalysed reaction is 3-methylbutanoyl-CoA + 2-oxoglutarate + O2 = 2-hydroxy-3-methylbutanoyl-CoA + succinate + CO2. It carries out the reaction heptadecanoyl-CoA + 2-oxoglutarate + O2 = 2-hydroxyheptadecanoyl-CoA + succinate + CO2. The enzyme catalyses eicosanoyl-CoA + 2-oxoglutarate + O2 = 2-hydroxyeicosanoyl-CoA + succinate + CO2. It catalyses the reaction octadecanoyl-CoA + 2-oxoglutarate + O2 = 2-hydroxyoctadecanoyl-CoA + succinate + CO2. The catalysed reaction is dodecanoyl-CoA + 2-oxoglutarate + O2 = 2-hydroxydodecanoyl-CoA + succinate + CO2. It carries out the reaction tetradecanoyl-CoA + 2-oxoglutarate + O2 = 2-hydroxytetradecanoyl-CoA + succinate + CO2. The enzyme catalyses hexanoyl-CoA + 2-oxoglutarate + O2 = 2-hydroxyhexanoyl-CoA + succinate + CO2. It catalyses the reaction butanoyl-CoA + 2-oxoglutarate + O2 = 2-hydroxybutanoyl-CoA + succinate + CO2. The catalysed reaction is 3-methylnonanoyl-CoA + 2-oxoglutarate + O2 = 2-hydroxy-3-methylnonanoyl-CoA + succinate + CO2. It carries out the reaction 3-methylundecanoyl-CoA + 2-oxoglutarate + O2 = 2-hydroxy-3-methylundecanoyl-CoA + succinate + CO2. The enzyme catalyses 3-methyldodecanoyl-CoA + 2-oxoglutarate + O2 = 2-hydroxy-3-methyldodecanoyl-CoA + succinate + CO2. It functions in the pathway lipid metabolism; fatty acid metabolism. Functionally, catalyzes the 2-hydroxylation of not only racemic phytanoyl-CoA and the isomers of 3-methylhexadecanoyl-CoA, but also a variety of other mono- branched 3-methylacyl-CoA esters (with a chain length of at least seven carbon atoms) and straight-chain acyl-CoA esters (with a chain length longer than four carbon atoms). Does not hydroxylate long and very long straight chain acyl-CoAs or 2-methyl-and 4-methyl-branched acyl-CoAs. This is Phytanoyl-CoA dioxygenase, peroxisomal (PHYH) from Bos taurus (Bovine).